A 196-amino-acid chain; its full sequence is Phosphoheptose isomerase (196 aa).

An SIS domain is found at 33-192 (LIQSLKNGGK…ESECGENGNT (160 aa)). 48–50 (NGG) is a binding site for substrate. Zn(2+) contacts are provided by His-57 and Glu-61. Residues Glu-61, 90-91 (ND), 116-118 (STS), Ser-121, and Gln-168 each bind substrate. 2 residues coordinate Zn(2+): Gln-168 and His-176.

The protein belongs to the SIS family. GmhA subfamily. In terms of assembly, homotetramer. Zn(2+) is required as a cofactor.

The protein resides in the cytoplasm. The catalysed reaction is 2 D-sedoheptulose 7-phosphate = D-glycero-alpha-D-manno-heptose 7-phosphate + D-glycero-beta-D-manno-heptose 7-phosphate. It participates in carbohydrate biosynthesis; D-glycero-D-manno-heptose 7-phosphate biosynthesis; D-glycero-alpha-D-manno-heptose 7-phosphate and D-glycero-beta-D-manno-heptose 7-phosphate from sedoheptulose 7-phosphate: step 1/1. In terms of biological role, catalyzes the isomerization of sedoheptulose 7-phosphate in D-glycero-D-manno-heptose 7-phosphate. This Helicobacter hepaticus (strain ATCC 51449 / 3B1) protein is Phosphoheptose isomerase.